The primary structure comprises 188 residues: Elongation factor P (188 aa).

Lys34 is subject to N6-(3,6-diaminohexanoyl)-5-hydroxylysine.

The protein belongs to the elongation factor P family. In terms of processing, may be beta-lysylated on the epsilon-amino group of Lys-34 by the combined action of EpmA and EpmB, and then hydroxylated on the C5 position of the same residue by EpmC (if this protein is present). Lysylation is critical for the stimulatory effect of EF-P on peptide-bond formation. The lysylation moiety may extend toward the peptidyltransferase center and stabilize the terminal 3-CCA end of the tRNA. Hydroxylation of the C5 position on Lys-34 may allow additional potential stabilizing hydrogen-bond interactions with the P-tRNA.

The protein localises to the cytoplasm. Its pathway is protein biosynthesis; polypeptide chain elongation. Its function is as follows. Involved in peptide bond synthesis. Alleviates ribosome stalling that occurs when 3 or more consecutive Pro residues or the sequence PPG is present in a protein, possibly by augmenting the peptidyl transferase activity of the ribosome. Modification of Lys-34 is required for alleviation. The chain is Elongation factor P from Pectobacterium carotovorum subsp. carotovorum (strain PC1).